Here is a 414-residue protein sequence, read N- to C-terminus: MTQANLSETLFKPRFKHPETSTLVRRFNPGTQPAVQSTLDGKTVPHWYRMINRLMWIWRGIDAREILEVQARIVMSEADRTDSELYDTVVGYRGGNWIYEWATQAMVWQQKATQEPDQTLSGQHWLHAANLYSIAAYPHLKGDDLAEQAQALANRAYEEAAQRLPCNMREIEFPIPGGASVTGFLHMPPGEGPFPTVLMCGGLDSLQIDYYSLFERYFAPKGIAMLTLDMPSIGFSSKWKLTQDSSLLHQHALKALENIPWVDHTRVAAFGFRFGANVAVRLAYLESSRLKAVACLGPVVHALLSDPQRQASVPEMYLDVLASRLGMHDASDEALRVELNRYSLKTQGLLGRRCPTPMMSGFWKNDPFSPEEESRLITSSSLDGKLLEIPFSPVYQNFDKGLKEITRWITQRLC.

Belongs to the FrsA family.

The catalysed reaction is a carboxylic ester + H2O = an alcohol + a carboxylate + H(+). Its function is as follows. Catalyzes the hydrolysis of esters. The protein is Esterase FrsA of Enterobacter sp. (strain 638).